A 205-amino-acid polypeptide reads, in one-letter code: Type III pantothenate kinase (205 aa).

5–12 (DIGNTTYH) serves as a coordination point for ATP. Substrate-binding positions include tyrosine 68 and 72–75 (GIDR). The active-site Proton acceptor is the aspartate 74. Residue aspartate 89 coordinates K(+). Serine 92 serves as a coordination point for ATP. Serine 144 provides a ligand contact to substrate.

It belongs to the type III pantothenate kinase family. In terms of assembly, homodimer. It depends on NH4(+) as a cofactor. K(+) is required as a cofactor.

The protein localises to the cytoplasm. The catalysed reaction is (R)-pantothenate + ATP = (R)-4'-phosphopantothenate + ADP + H(+). It functions in the pathway cofactor biosynthesis; coenzyme A biosynthesis; CoA from (R)-pantothenate: step 1/5. Its function is as follows. Catalyzes the phosphorylation of pantothenate (Pan), the first step in CoA biosynthesis. This chain is Type III pantothenate kinase, found in Sulfurimonas denitrificans (strain ATCC 33889 / DSM 1251) (Thiomicrospira denitrificans (strain ATCC 33889 / DSM 1251)).